Consider the following 345-residue polypeptide: Trans-enoyl reductase tndF (345 aa).

Positions methionine 1 to lysine 26 are disordered. NADP(+) is bound by residues cysteine 44–arginine 49, serine 168–valine 171, serine 191–histidine 194, tyrosine 209, and leucine 244–aspartate 245.

The protein belongs to the zinc-containing alcohol dehydrogenase family.

It functions in the pathway secondary metabolite biosynthesis; terpenoid biosynthesis. Trans-enoyl reductase; part of the gene cluster that mediates the biosynthesis of talaronoid C, a fusicoccane diterpenoid with an unprecedented tricyclic 5/8/6 ring system. The first step in the pathway is performed by the fusicoccadiene synthase tndC that possesses both prenyl transferase and terpene cyclase activity, converting isopentenyl diphosphate and dimethylallyl diphosphate into geranylgeranyl diphosphate (GGDP) and further converting GGDP into talarodiene, a precursor for talaronoid C. The remaining enzymes from the cluster include the cytochrome P450 monooxygenase tndB, the aldehyde reductase tndE and the alcohol dehydrogenase tndF that are involved in the conversion of talarodiene into talaronoid C. The protein is Trans-enoyl reductase tndF of Aspergillus flavipes.